A 113-amino-acid polypeptide reads, in one-letter code: Cell cycle protein GpsB (113 aa).

A coiled-coil region spans residues 36–65 (IKDYETYAALVKSLRQEIADLKEELARKPQ). Positions 61–82 (ARKPQVSSAPSPSHPDPIDVAA) are disordered.

The protein belongs to the GpsB family. Forms polymers through the coiled coil domains. Interacts with PBP1, MreC and EzrA.

Its subcellular location is the cytoplasm. In terms of biological role, divisome component that associates with the complex late in its assembly, after the Z-ring is formed, and is dependent on DivIC and PBP2B for its recruitment to the divisome. Together with EzrA, is a key component of the system that regulates PBP1 localization during cell cycle progression. Its main role could be the removal of PBP1 from the cell pole after pole maturation is completed. Also contributes to the recruitment of PBP1 to the division complex. Not essential for septum formation. This Streptococcus pneumoniae (strain Hungary19A-6) protein is Cell cycle protein GpsB.